Consider the following 453-residue polypeptide: Bifunctional protein GlmU (453 aa).

Residues 1 to 231 form a pyrophosphorylase region; the sequence is MERTCLAVIL…EIEMTGCNTR (231 aa). Residues 10-13, K24, Q77, 82-83, 105-107, G143, E157, N172, and N229 contribute to the UDP-N-acetyl-alpha-D-glucosamine site; these read LAAG, GT, and YGD. D107 provides a ligand contact to Mg(2+). Position 229 (N229) interacts with Mg(2+). The linker stretch occupies residues 232–252; that stretch reads AELAVIERFWQERRRHQLMLS. Positions 253–453 are N-acetyltransferase; that stretch reads GVTMIAPETV…ATKAAKKAKG (201 aa). Residues R318 and K336 each contribute to the UDP-N-acetyl-alpha-D-glucosamine site. H348 functions as the Proton acceptor in the catalytic mechanism. UDP-N-acetyl-alpha-D-glucosamine contacts are provided by Y351 and N362. Acetyl-CoA-binding positions include A365, 371-372, S390, S408, and R425; that span reads NY.

The protein in the N-terminal section; belongs to the N-acetylglucosamine-1-phosphate uridyltransferase family. This sequence in the C-terminal section; belongs to the transferase hexapeptide repeat family. As to quaternary structure, homotrimer. Mg(2+) serves as cofactor.

Its subcellular location is the cytoplasm. The enzyme catalyses alpha-D-glucosamine 1-phosphate + acetyl-CoA = N-acetyl-alpha-D-glucosamine 1-phosphate + CoA + H(+). The catalysed reaction is N-acetyl-alpha-D-glucosamine 1-phosphate + UTP + H(+) = UDP-N-acetyl-alpha-D-glucosamine + diphosphate. It functions in the pathway nucleotide-sugar biosynthesis; UDP-N-acetyl-alpha-D-glucosamine biosynthesis; N-acetyl-alpha-D-glucosamine 1-phosphate from alpha-D-glucosamine 6-phosphate (route II): step 2/2. The protein operates within nucleotide-sugar biosynthesis; UDP-N-acetyl-alpha-D-glucosamine biosynthesis; UDP-N-acetyl-alpha-D-glucosamine from N-acetyl-alpha-D-glucosamine 1-phosphate: step 1/1. Its pathway is bacterial outer membrane biogenesis; LPS lipid A biosynthesis. Its function is as follows. Catalyzes the last two sequential reactions in the de novo biosynthetic pathway for UDP-N-acetylglucosamine (UDP-GlcNAc). The C-terminal domain catalyzes the transfer of acetyl group from acetyl coenzyme A to glucosamine-1-phosphate (GlcN-1-P) to produce N-acetylglucosamine-1-phosphate (GlcNAc-1-P), which is converted into UDP-GlcNAc by the transfer of uridine 5-monophosphate (from uridine 5-triphosphate), a reaction catalyzed by the N-terminal domain. The protein is Bifunctional protein GlmU of Rhizobium leguminosarum bv. trifolii (strain WSM2304).